Here is a 234-residue protein sequence, read N- to C-terminus: L-cystine transport system permease protein TcyB (234 aa).

Transmembrane regions (helical) follow at residues 8-28, 36-56, 78-98, 100-120, and 199-219; these read ALTL…WPIL, IPLT…TALA, TPLL…NVTL, PFPS…SEII, and ILVI…LLSL. The ABC transmembrane type-1 domain occupies 32–221; that stretch reads IYYTIPLTIL…IICFLLSLVQ (190 aa).

Belongs to the binding-protein-dependent transport system permease family. The complex is composed of two ATP-binding proteins (TcyC), two transmembrane proteins (TcyB) and a solute-binding protein (TcyA).

It localises to the cell membrane. Functionally, part of the ABC transporter complex TcyABC involved in L-cystine import. Probably responsible for the translocation of the substrate across the membrane. This is L-cystine transport system permease protein TcyB (tcyB) from Bacillus subtilis (strain 168).